The chain runs to 226 residues: tRNA (guanine-N(1)-)-methyltransferase (226 aa).

Residues Gly-112 and 132 to 137 (IGDYVL) contribute to the S-adenosyl-L-methionine site.

The protein belongs to the RNA methyltransferase TrmD family. Homodimer.

The protein localises to the cytoplasm. It catalyses the reaction guanosine(37) in tRNA + S-adenosyl-L-methionine = N(1)-methylguanosine(37) in tRNA + S-adenosyl-L-homocysteine + H(+). In terms of biological role, specifically methylates guanosine-37 in various tRNAs. This chain is tRNA (guanine-N(1)-)-methyltransferase, found in Flavobacterium johnsoniae (strain ATCC 17061 / DSM 2064 / JCM 8514 / BCRC 14874 / CCUG 350202 / NBRC 14942 / NCIMB 11054 / UW101) (Cytophaga johnsonae).